The following is a 284-amino-acid chain: RAD52 motif-containing protein 1 (284 aa).

The tract at residues 1–92 (MAELVPFAVP…KQLFQKSPVK (92 aa)) is necessary for nuclear localization and for nucleolar accumulation in response to heat shock. Residues 15-98 (KTLLVWELSS…SPVKVRLGTR (84 aa)) enclose the RRM domain. The segment at 90 to 133 (PVKVRLGTRHKAVQHQALALNSSKCQELANYYFGFNGCSKRIIK) is necessary for nuclear and nucleolar localization.

As to quaternary structure, homodimer. In terms of tissue distribution, expressed in testis.

The protein localises to the nucleus. It localises to the cytoplasm. The protein resides in the nucleolus. Its subcellular location is the PML body. It is found in the cajal body. May confer resistance to the antitumor agent cisplatin. Binds to DNA and RNA. The chain is RAD52 motif-containing protein 1 (RDM1) from Homo sapiens (Human).